A 1026-amino-acid polypeptide reads, in one-letter code: Multidrug resistance protein MdtC (1026 aa).

The next 12 membrane-spanning stretches (helical) occupy residues 12–32 (VATL…FRLL), 333–353 (EVEQ…FLFL), 360–380 (AIPA…MYLC), 387–407 (LSLM…IVVL), 431–451 (VGFT…PLLL), 463–483 (FAVT…TLTP), 528–548 (WVLL…ISIP), 853–873 (LLLI…LYES), 875–895 (VHPL…LLAL), 897–917 (WFGA…IGIV), 953–973 (PIMM…LTSG), and 984–1004 (ITIV…TPVV).

Belongs to the resistance-nodulation-cell division (RND) (TC 2.A.6) family. MdtC subfamily. As to quaternary structure, part of a tripartite efflux system composed of MdtA, MdtB and MdtC. MdtC forms a heteromultimer with MdtB.

The protein localises to the cell inner membrane. In Pectobacterium carotovorum subsp. carotovorum (strain PC1), this protein is Multidrug resistance protein MdtC.